The chain runs to 905 residues: MQSIKKVIGSIDFGILSPQEIRKMSAAEITVPDTYDEDGYPIEGGLMDKRLGVIDPGLRCETCGARAGECPGHFGHVELARPVIHVGFAKTIHRVLESTCRECGRIKLTDEEIEEYFHKFEVTGNRKKAKDRLIKEIHKKAKERMVCPHCGSPQFPIKFERPTVYWELRKDEEGNEYKHRMMPSEVRDRLEKIPDRDLPLIGLDAEKARPEWMVLTVLPVPPVTMRPSITLESGIRAEDDLTHKLVDIIRINNRLKSNIEAGAPQLIIEDLWDLLQYHVTTYINNETSGIPPAKHKSGRPLKTLSQRLKGKEGRFRGNLSGKRVNFSARTVISPDPMISINEVGVPMAIAMELTVPEKVTEFNFEKLRKMVLNGPEKYPGANYVIDPEGRRIRLMENNLETVAEKLDIGWTVERHLLDGDVVLFNRQPSLHRMSIMAHRVRVMPYRTFRLNLSVCPPYNADFDGDEMNLHVPQTEEAQAEAKILMEVQNHIISPRYGGPLIAGIQDHISGGYLLTREGAYFERTEVEQMLMFAGVDVDRLPEPDKVENGVELWSGKTIFSLLLPKDLTIWYRNKLCDEPGRCEALEKLIEEKLIPDEEEVRALAYDGFTYILNGKLLSGAIDKTAYGREDGKLLDIIVREYGVERARQFLDQVTKLAIWVITHKGFTTAIDDEDLPTEALDRIREIIREAEERVNRLIEAYRNGELEPIPGKTLEETLESKIMAALAEARDNAGKVAERYLGMSNHAVIMAKTGARGKILNITQMAAMLGQQSIRGKRLYRGYRERVLTHFKPGDLGARARGFVINSYKSGLTPQEYFFHAMGGREGLVDTAVRTAQSGYMQRRLINALQDLKVEYDGTVRDPTGIIVQFRYGEDGIDPMRSWKGKTIDVNRVVLRTLLKLRGKG.

Zn(2+)-binding residues include cysteine 60, cysteine 63, cysteine 70, histidine 73, cysteine 100, cysteine 103, cysteine 147, and cysteine 150. Residues aspartate 461, aspartate 463, and aspartate 465 each contribute to the Mg(2+) site.

It belongs to the RNA polymerase beta' chain family. As to quaternary structure, part of the RNA polymerase complex. Requires Mg(2+) as cofactor. Zn(2+) serves as cofactor.

Its subcellular location is the cytoplasm. It catalyses the reaction RNA(n) + a ribonucleoside 5'-triphosphate = RNA(n+1) + diphosphate. Functionally, DNA-dependent RNA polymerase (RNAP) catalyzes the transcription of DNA into RNA using the four ribonucleoside triphosphates as substrates. Forms the clamp head domain. The polypeptide is DNA-directed RNA polymerase subunit Rpo1N (Thermococcus celer).